The following is a 448-amino-acid chain: Tubulin beta-2 chain (448 aa).

Positions 11, 69, 138, 142, 143, 144, 204, and 226 each coordinate GTP. E69 provides a ligand contact to Mg(2+). Residues 429–448 are disordered; it reads TADEDGYEYEDEEEVGEEDA.

The protein belongs to the tubulin family. As to quaternary structure, dimer of alpha and beta chains. A typical microtubule is a hollow water-filled tube with an outer diameter of 25 nm and an inner diameter of 15 nM. Alpha-beta heterodimers associate head-to-tail to form protofilaments running lengthwise along the microtubule wall with the beta-tubulin subunit facing the microtubule plus end conferring a structural polarity. Microtubules usually have 13 protofilaments but different protofilament numbers can be found in some organisms and specialized cells. Mg(2+) is required as a cofactor.

It is found in the cytoplasm. Its subcellular location is the cytoskeleton. Functionally, tubulin is the major constituent of microtubules, a cylinder consisting of laterally associated linear protofilaments composed of alpha- and beta-tubulin heterodimers. Microtubules grow by the addition of GTP-tubulin dimers to the microtubule end, where a stabilizing cap forms. Below the cap, tubulin dimers are in GDP-bound state, owing to GTPase activity of alpha-tubulin. This is Tubulin beta-2 chain (TUBB2) from Lupinus albus (White lupine).